The chain runs to 400 residues: WD repeat and FYVE domain-containing protein 2 (400 aa).

WD repeat units follow at residues 22-61, 66-105, 112-150, 153-192, 197-236, and 240-279; these read GSQEVVNMAVIVPKEEGVISVSEDRTVRVWLKRDSGQYWP, AMPSPCSCMSFNPETRRLSIGLDNGTISEFILSEDYNKMT, AHQSRVTMILFVLELEWVLSTGQDKQFAWHCSESGQRLG, RTSAVASGLQFDVETRHVFIGDHSGQVTILKLEQENCTLV, GHTGGVTALCWDPVQRVLFSGSSDHSVIMWDIGGRKGTAI, and GHNDRVQALSYAQHTRQLISCGGDGGIVVWNMDVERQETP. Residues 281-352 form an FYVE-type zinc finger; that stretch reads WLDSDSCQKC…VCDSCHEAIT (72 aa). 8 residues coordinate Zn(2+): Cys-287, Cys-290, Cys-314, Cys-317, Cys-322, Cys-325, Cys-344, and Cys-347. One copy of the WD 7 repeat lies at 364 to 399; that stretch reads DSKHNIVHVHFDATRGWLLTSGTDKVIKLWDMTPVV.

As to quaternary structure, homodimer. Interacts (via WD repeats 1-3) with AKT1, AKT2, PRKCZ and PRKCI. Interacts with VAMP2. Forms a complex with VAMP2 and PRKCZ. Interacts with FOXO1. Forms a complex with AKT1 and FOXO1.

Its subcellular location is the endosome. The protein resides in the early endosome. It localises to the cytoplasm. In terms of biological role, acts in an adapter protein-like fashion to mediate the interaction between the kinase PRKCZ and its substrate VAMP2 and increases the PRKCZ-dependent phosphorylation of VAMP2. Positively regulates adipocyte differentiation, by facilitating the phosphorylation and thus inactivation of the anti-adipogenetic transcription factor FOXO1 by the kinase AKT1. Plays a role in endosomal control of AKT2 signaling; required for insulin-stimulated AKT2 phosphorylation and glucose uptake and insulin-stimulated phosphorylation of AKT2 substrates. Participates in transferrin receptor endocytosis. The polypeptide is WD repeat and FYVE domain-containing protein 2 (WDFY2) (Homo sapiens (Human)).